Reading from the N-terminus, the 398-residue chain is tRNA-specific 2-thiouridylase MnmA (398 aa).

Residues 19 to 26 (AMSGGVDS) and Leu-45 contribute to the ATP site. Catalysis depends on Cys-113, which acts as the Nucleophile. A disulfide bridge connects residues Cys-113 and Cys-210. An ATP-binding site is contributed by Gly-137. Residues 160–162 (RDQ) form an interaction with tRNA region. The Cysteine persulfide intermediate role is filled by Cys-210.

It belongs to the MnmA/TRMU family.

The protein resides in the cytoplasm. The catalysed reaction is S-sulfanyl-L-cysteinyl-[protein] + uridine(34) in tRNA + AH2 + ATP = 2-thiouridine(34) in tRNA + L-cysteinyl-[protein] + A + AMP + diphosphate + H(+). Its function is as follows. Catalyzes the 2-thiolation of uridine at the wobble position (U34) of tRNA, leading to the formation of s(2)U34. This chain is tRNA-specific 2-thiouridylase MnmA, found in Rhodopseudomonas palustris (strain BisB5).